Consider the following 486-residue polypeptide: NADH-quinone oxidoreductase subunit N (486 aa).

14 helical membrane passes run 8-28 (LIAL…ILSI), 36-56 (FIAF…YFLI), 74-94 (ILYI…AYPW), 104-124 (EFYL…ISNH), 125-145 (MASL…LIAY), 160-180 (LVLS…IYAI), 204-224 (VLFG…MVPF), 239-259 (VLSF…LYFF), 270-290 (IFLI…LMAI), 298-318 (FFGY…LVSK), 329-349 (GIFL…INLF), 374-394 (ASIV…LGFF), 407-427 (HLWT…YGYL), and 459-479 (ILIF…NPLI).

Belongs to the complex I subunit 2 family. As to quaternary structure, NDH-1 is composed of 13 different subunits. Subunits NuoA, H, J, K, L, M, N constitute the membrane sector of the complex.

Its subcellular location is the cell membrane. The enzyme catalyses a quinone + NADH + 5 H(+)(in) = a quinol + NAD(+) + 4 H(+)(out). In terms of biological role, NDH-1 shuttles electrons from NADH, via FMN and iron-sulfur (Fe-S) centers, to quinones in the respiratory chain. The immediate electron acceptor for the enzyme in this species is believed to be ubiquinone. Couples the redox reaction to proton translocation (for every two electrons transferred, four hydrogen ions are translocated across the cytoplasmic membrane), and thus conserves the redox energy in a proton gradient. The polypeptide is NADH-quinone oxidoreductase subunit N (Buchnera aphidicola subsp. Schizaphis graminum (strain Sg)).